A 128-amino-acid polypeptide reads, in one-letter code: Small ribosomal subunit protein uS14m (128 aa).

This sequence belongs to the universal ribosomal protein uS14 family. As to quaternary structure, component of the mitochondrial ribosome small subunit (28S) which comprises a 12S rRNA and about 30 distinct proteins. Interacts with LIAT1.

It localises to the mitochondrion. In Mus musculus (Mouse), this protein is Small ribosomal subunit protein uS14m (Mrps14).